We begin with the raw amino-acid sequence, 506 residues long: 2,3-bisphosphoglycerate-independent phosphoglycerate mutase (506 aa).

Residues Asp13 and Ser63 each coordinate Mn(2+). Residue Ser63 is the Phosphoserine intermediate of the active site. Residues His124, 153–154, Arg183, Arg189, 254–257, and Lys330 each bind substrate; these read RD and RADR. 5 residues coordinate Mn(2+): Asp396, His400, Asp437, His438, and His456.

The protein belongs to the BPG-independent phosphoglycerate mutase family. As to quaternary structure, monomer. Mn(2+) is required as a cofactor.

The catalysed reaction is (2R)-2-phosphoglycerate = (2R)-3-phosphoglycerate. The protein operates within carbohydrate degradation; glycolysis; pyruvate from D-glyceraldehyde 3-phosphate: step 3/5. Catalyzes the interconversion of 2-phosphoglycerate and 3-phosphoglycerate. This Cereibacter sphaeroides (strain KD131 / KCTC 12085) (Rhodobacter sphaeroides) protein is 2,3-bisphosphoglycerate-independent phosphoglycerate mutase.